Reading from the N-terminus, the 251-residue chain is Putative cysteine-rich repeat secretory protein 36 (251 aa).

An N-terminal signal peptide occupies residues 1–28 (MHSSYSLSKCLVCFTILAIQTLIRRVSS). Gnk2-homologous domains lie at 35-139 (YLNH…NSPP) and 144-248 (YENT…LYPF).

This sequence belongs to the cysteine-rich repeat secretory protein family.

The protein resides in the secreted. The sequence is that of Putative cysteine-rich repeat secretory protein 36 (CRRSP36) from Arabidopsis thaliana (Mouse-ear cress).